A 406-amino-acid polypeptide reads, in one-letter code: LIM/homeobox protein Lhx1 (406 aa).

2 LIM zinc-binding domains span residues 4–54 and 63–117; these read CAGC…CKND and CAGC…CKED. Disordered regions lie at residues 128–187 and 293–374; these read NSLH…RTTI and YDFF…EVFG. A compositionally biased stretch (low complexity) spans 137 to 148; sequence SDPSLSPDSQDP. The segment covering 151 to 167 has biased composition (basic and acidic residues); it reads DDAKDSESANVSDKEAG. S162 carries the post-translational modification Phosphoserine. The homeobox DNA-binding region spans 180–239; it reads RRGPRTTIKAKQLETLKAAFAATPKPTRHIREQLAQETGLNMRVIQVWFQNRRSKERRMK. The span at 315-327 shows a compositional bias: low complexity; the sequence is PSSGPSGTPLGGL. The segment covering 352–362 has biased composition (pro residues); sequence GDSPSPEPSLP.

Interacts with LDB1 via the tandem LIM domains. In terms of tissue distribution, expressed in the brain, thymus, and tonsils. Expressed in samples from patients with chronic myeloid leukemia (CML) and in 58% of acute myeloid leukemia (AML) cell lines.

The protein localises to the nucleus. In terms of biological role, potential transcription factor. May play a role in early mesoderm formation and later in lateral mesoderm differentiation and neurogenesis. This is LIM/homeobox protein Lhx1 (LHX1) from Homo sapiens (Human).